Here is a 141-residue protein sequence, read N- to C-terminus: MLTEDEKQLIQHVWEKVLGHQEDFGAEALERMFTVYPSTKTYFPHFDLHHDSEQIRHHGKKVVSALGDAVRHMDNLSATLSELSNLHAYNLRVDPVNFKLLSHCFQVVLGAHLGREYTPQVQVAYDKFLAAVSAVLAEKYR.

The 141-residue stretch at 1 to 141 (MLTEDEKQLI…VSAVLAEKYR (141 aa)) folds into the Globin domain. H58 and H87 together coordinate heme b.

Belongs to the globin family. In terms of assembly, heterotetramer of two alpha-D chains and two beta chains. Red blood cells.

In terms of biological role, involved in oxygen transport from the lung to the various peripheral tissues. In Chelonoidis carbonarius (Red-footed tortoise), this protein is Hemoglobin subunit alpha-D (HBAD).